We begin with the raw amino-acid sequence, 174 residues long: Neuromedin-U (174 aa).

The first 37 residues, 1–37 (MSRAAGHRPGLSAGQLAAATASPLLSLLLLLACCADA), serve as a signal peptide directing secretion. A propeptide spanning residues 38–105 (CKGVPISPQR…EQSEKDNTKR (68 aa)) is cleaved from the precursor. Met141 carries the methionine sulfoxide; partial modification. Asn166 bears the Asparagine amide mark. Residues 170–174 (STSFI) constitute a propeptide that is removed on maturation.

It belongs to the NmU family.

The protein resides in the secreted. Ligand for receptors NMUR1 and NMUR2. Stimulates muscle contractions of specific regions of the gastrointestinal tract. Its function is as follows. Does not function as a ligand for either NMUR1 or NMUR2. Indirectly induces prolactin release although its potency is much lower than that of neuromedin precursor-related peptide 36. In terms of biological role, does not function as a ligand for either NMUR1 or NMUR2. Indirectly induces prolactin release from lactotroph cells in the pituitary gland, probably via the hypothalamic dopaminergic system. Functionally, stimulates muscle contractions of specific regions of the gastrointestinal tract. The protein is Neuromedin-U (Nmu) of Mus musculus (Mouse).